A 313-amino-acid chain; its full sequence is Ribosomal RNA small subunit methyltransferase H (313 aa).

Residues 35–37 (GGH), D55, F81, D103, and Q110 contribute to the S-adenosyl-L-methionine site.

It belongs to the methyltransferase superfamily. RsmH family.

The protein resides in the cytoplasm. The catalysed reaction is cytidine(1402) in 16S rRNA + S-adenosyl-L-methionine = N(4)-methylcytidine(1402) in 16S rRNA + S-adenosyl-L-homocysteine + H(+). Specifically methylates the N4 position of cytidine in position 1402 (C1402) of 16S rRNA. The chain is Ribosomal RNA small subunit methyltransferase H from Pseudomonas aeruginosa (strain UCBPP-PA14).